Here is a 773-residue protein sequence, read N- to C-terminus: MPPGAKVPQAEIYKTSNLQGAVPTNSWESSILWNQYSLPIYAHPLTFKFKAEGIEVGKPALGGSGIAYFGAHKNDFTVGHSSVYTFPDARADKISDFAVDAVMASGSGSIKATLMKGSPYAYFVFTGGNPRIDFSGTPTVFYGDSGSQCLGVTINGVNYGLFAPSGSKWQGIGTGTITCILPAGKNYFSIAVLPDNTVSTLTYYKDYAYCFVTDTKVEWSYNETESTLTTTFTAEVSVKEGTNKGTILALYPHQWRNNPHILPLPYTYSTLRGIMKTIQGTSFKTVYRYHGILPNLPDKGTYDREALNRYINELALQADAPVAVDTYWFGKHLGKLSCALPIAEQLGNISAKDRFISFMKSSLEDWFTAKEGETAKLFYYDSNWGTLIGYPSSYGSDEELNDHHFHYGYFLHAAAQIALRDPQWASRDNWGAMVELLIKDIANWDRNDTRFPFLRNFDPYEGHSWASGHAGFADGNNQESSSEAINAWQAIILWGEATGNKTIRDLGIYLYTTEVEAVCNYWFDLYKDIFSPSYGHNYASMVWGGKYCHEIWWNGTNSEKHGINFLPITAASLYLGKDPNYIKQNYEEMLRECGTSQPPNWKDIQYMYYALYDPAAAKNMWNESIVPEDGESKAHTYHWICNLDSLGLPDFSVTADTPLYSVFNKNNIRTYVVYNASSSAKKVTFSDGKVMTVGPHSMAVSTGSESEVLAGDLNGDGKINSTDISLMKRYLLKQIVDLPVEDDIKAADINKDGKVNSTDMSILKRVILRNYPL.

The segment at 1–194 is beta-sandwich subdomain; it reads MPPGAKVPQA…KNYFSIAVLP (194 aa). One can recognise a GH81 domain in the interval 1–647; that stretch reads MPPGAKVPQA…HWICNLDSLG (647 aa). The Mg(2+) site is built by I31, N34, Q35, Y36, and A89. The interval 195 to 288 is alpha/beta subdomain; the sequence is DNTVSTLTYY…QGTSFKTVYR (94 aa). The interval 298-647 is (alpha/beta)6 barrel subdomain; that stretch reads DKGTYDREAL…HWICNLDSLG (350 aa). The (1,3-beta-D-glucosyl)n site is built by Y327 and K331. The Ca(2+) site is built by D365, T368, E373, and K376. (1,3-beta-D-glucosyl)n contacts are provided by D402 and H406. Residue D402 is part of the active site. The Ca(2+) site is built by L454, R455, and F457. (1,3-beta-D-glucosyl)n is bound by residues N477, E479, and E483. Catalysis depends on residues E479 and E483. Positions 527, 618, 619, and 621 each coordinate Mg(2+). The Ca(2+) site is built by D712, N714, D716, G717, K718, D723, D748, I749, N750, D752, K754, and D759.

The protein belongs to the glycosyl hydrolase 81 family. Ca(2+) is required as a cofactor. Requires Mg(2+) as cofactor.

The protein resides in the secreted. It catalyses the reaction Hydrolysis of (1-&gt;3)-beta-D-glucosidic linkages in (1-&gt;3)-beta-D-glucans.. With respect to regulation, inhibited by manganese, zinc, and copper ions. Functionally, cleaves internal linkages in 1,3-beta-glucan. May contribute to plant biomass degradation. The sequence is that of Glucan endo-1,3-beta-D-glucosidase from Acetivibrio thermocellus (strain ATCC 27405 / DSM 1237 / JCM 9322 / NBRC 103400 / NCIMB 10682 / NRRL B-4536 / VPI 7372) (Clostridium thermocellum).